Here is a 182-residue protein sequence, read N- to C-terminus: CDP-diacylglycerol--glycerol-3-phosphate 3-phosphatidyltransferase (182 aa).

Residues Gln-2–Phe-12 lie on the Cytoplasmic side of the membrane. The helical transmembrane segment at Arg-13–Leu-37 threads the bilayer. Residues Ile-38–Thr-60 are Periplasmic-facing. Residues Arg-61–Leu-81 traverse the membrane as a helical segment. Residues Val-82–Tyr-86 are Cytoplasmic-facing. Residues His-87–Ala-107 form a helical membrane-spanning segment. Topologically, residues Leu-108–Pro-145 are periplasmic. A helical transmembrane segment spans residues Asn-146 to Met-168. At Leu-169–Asp-181 the chain is on the cytoplasmic side.

The protein belongs to the CDP-alcohol phosphatidyltransferase class-I family.

It localises to the cell inner membrane. The catalysed reaction is a CDP-1,2-diacyl-sn-glycerol + sn-glycerol 3-phosphate = a 1,2-diacyl-sn-glycero-3-phospho-(1'-sn-glycero-3'-phosphate) + CMP + H(+). It participates in phospholipid metabolism; phosphatidylglycerol biosynthesis; phosphatidylglycerol from CDP-diacylglycerol: step 1/2. In terms of biological role, catalyzes the conversion of cytidine diphosphate diacylglycerol (CDP-DG) and glycerol 3-phosphate into phosphatidylglycerol. Essential for the synthesis of anionic phospholipids, thereby playing a role in balancing the ratio of zwitterionic and anionic phospholipids, which is thought to be important for normal membrane function. In Shigella boydii serotype 4 (strain Sb227), this protein is CDP-diacylglycerol--glycerol-3-phosphate 3-phosphatidyltransferase.